Here is a 1117-residue protein sequence, read N- to C-terminus: Isoleucine--tRNA ligase (1117 aa).

Residues 64–74 carry the 'HIGH' region motif; it reads PFANGLPHYGH. A 'KMSKS' region motif is present at residues 647-651; sequence KLSKR. Position 650 (Lys650) interacts with ATP.

Belongs to the class-I aminoacyl-tRNA synthetase family. IleS type 2 subfamily. In terms of assembly, monomer. Zn(2+) serves as cofactor.

The protein resides in the cytoplasm. The enzyme catalyses tRNA(Ile) + L-isoleucine + ATP = L-isoleucyl-tRNA(Ile) + AMP + diphosphate. Catalyzes the attachment of isoleucine to tRNA(Ile). As IleRS can inadvertently accommodate and process structurally similar amino acids such as valine, to avoid such errors it has two additional distinct tRNA(Ile)-dependent editing activities. One activity is designated as 'pretransfer' editing and involves the hydrolysis of activated Val-AMP. The other activity is designated 'posttransfer' editing and involves deacylation of mischarged Val-tRNA(Ile). The chain is Isoleucine--tRNA ligase from Ehrlichia ruminantium (strain Welgevonden).